Consider the following 83-residue polypeptide: Small ribosomal subunit protein uS17 (83 aa).

This sequence belongs to the universal ribosomal protein uS17 family. Part of the 30S ribosomal subunit.

Functionally, one of the primary rRNA binding proteins, it binds specifically to the 5'-end of 16S ribosomal RNA. The polypeptide is Small ribosomal subunit protein uS17 (Chlamydia abortus (strain DSM 27085 / S26/3) (Chlamydophila abortus)).